A 91-amino-acid polypeptide reads, in one-letter code: Elongation factor 1-beta (91 aa).

This sequence belongs to the EF-1-beta/EF-1-delta family.

Promotes the exchange of GDP for GTP in EF-1-alpha/GDP, thus allowing the regeneration of EF-1-alpha/GTP that could then be used to form the ternary complex EF-1-alpha/GTP/AAtRNA. The polypeptide is Elongation factor 1-beta (Thermococcus kodakarensis (strain ATCC BAA-918 / JCM 12380 / KOD1) (Pyrococcus kodakaraensis (strain KOD1))).